The primary structure comprises 23 residues: Cytochrome c oxidase subunit 7A-liver, mitochondrial (23 aa).

The protein belongs to the cytochrome c oxidase VIIa family. As to quaternary structure, component of the cytochrome c oxidase (complex IV, CIV), a multisubunit enzyme composed of 14 subunits. The complex is composed of a catalytic core of 3 subunits MT-CO1, MT-CO2 and MT-CO3, encoded in the mitochondrial DNA, and 11 supernumerary subunits COX4I, COX5A, COX5B, COX6A, COX6B, COX6C, COX7A, COX7B, COX7C, COX8 and NDUFA4, which are encoded in the nuclear genome. The complex exists as a monomer or a dimer and forms supercomplexes (SCs) in the inner mitochondrial membrane with NADH-ubiquinone oxidoreductase (complex I, CI) and ubiquinol-cytochrome c oxidoreductase (cytochrome b-c1 complex, complex III, CIII), resulting in different assemblies (supercomplex SCI(1)III(2)IV(1) and megacomplex MCI(2)III(2)IV(2)).

The protein resides in the mitochondrion inner membrane. The protein operates within energy metabolism; oxidative phosphorylation. Component of the cytochrome c oxidase, the last enzyme in the mitochondrial electron transport chain which drives oxidative phosphorylation. The respiratory chain contains 3 multisubunit complexes succinate dehydrogenase (complex II, CII), ubiquinol-cytochrome c oxidoreductase (cytochrome b-c1 complex, complex III, CIII) and cytochrome c oxidase (complex IV, CIV), that cooperate to transfer electrons derived from NADH and succinate to molecular oxygen, creating an electrochemical gradient over the inner membrane that drives transmembrane transport and the ATP synthase. Cytochrome c oxidase is the component of the respiratory chain that catalyzes the reduction of oxygen to water. Electrons originating from reduced cytochrome c in the intermembrane space (IMS) are transferred via the dinuclear copper A center (CU(A)) of subunit 2 and heme A of subunit 1 to the active site in subunit 1, a binuclear center (BNC) formed by heme A3 and copper B (CU(B)). The BNC reduces molecular oxygen to 2 water molecules using 4 electrons from cytochrome c in the IMS and 4 protons from the mitochondrial matrix. This chain is Cytochrome c oxidase subunit 7A-liver, mitochondrial, found in Oncorhynchus mykiss (Rainbow trout).